A 76-amino-acid polypeptide reads, in one-letter code: Exodeoxyribonuclease 7 small subunit (76 aa).

This sequence belongs to the XseB family. Heterooligomer composed of large and small subunits.

Its subcellular location is the cytoplasm. It catalyses the reaction Exonucleolytic cleavage in either 5'- to 3'- or 3'- to 5'-direction to yield nucleoside 5'-phosphates.. In terms of biological role, bidirectionally degrades single-stranded DNA into large acid-insoluble oligonucleotides, which are then degraded further into small acid-soluble oligonucleotides. This is Exodeoxyribonuclease 7 small subunit from Geotalea daltonii (strain DSM 22248 / JCM 15807 / FRC-32) (Geobacter daltonii).